The sequence spans 96 residues: Large ribosomal subunit protein bL27 (96 aa).

A propeptide spanning residues 1-9 (MLNMNLQLL) is cleaved from the precursor.

This sequence belongs to the bacterial ribosomal protein bL27 family. The N-terminus is cleaved by ribosomal processing cysteine protease Prp.

The protein is Large ribosomal subunit protein bL27 of Clostridioides difficile (strain 630) (Peptoclostridium difficile).